The sequence spans 540 residues: MRLDTNSNVDFKAFESSSSSCPVKLDNLATWGGSQKTDTRLPITDYSNLGGPRHNRSPFPLCKDVNNRFVIWDGDMTTLEVDAITNTSDETLTESNSISERIFAVAGNQLREELSTTVKECRTGDVRITRGYNLPAKYVLHTVAPAYREKFKTAAENTLHCCYRNVLCKAKELNLHTIALCNISAHQKSFPADVAAHIALRTIRRYLDKCTLQVVILCVGSSERGTYEVLAPLYFPRDQLEERSALWQLPKDIGGEFGEPQHPDPDRQIRIIRNPQHSVHMRHHLADDDSDVSPHDMEGNSSDLEYGARDMNGLSLNSYSSGLQAQLQRDLDRQHLLSDRPRTGVYENVISEGVEGIEHQERYERLLRRAQVEDLTEVSGIGCLYQSGVDRLGRPVIVFCGKWFPAQNIDLEKALLYLIKLLDPIVKGDYVISYFHTLTSTNNYPSLHWLREVYSVLPYKYKKNLKAFYIVHPTFWTKMMTWWFTTFMAPAIKAKVHSLPGVEHLYSAITKDQLEIPAYITEYDMATNGLHYFNPVPTAS.

The Macro domain occupies 56–235 (RSPFPLCKDV…TYEVLAPLYF (180 aa)). The 158-residue stretch at 371 to 528 (QVEDLTEVSG…YITEYDMATN (158 aa)) folds into the CRAL-TRIO domain.

It belongs to the GDAP2 family.

In Drosophila melanogaster (Fruit fly), this protein is Protein GDAP2 homolog.